Consider the following 79-residue polypeptide: Cyclin-dependent kinases regulatory subunit 1 (79 aa).

Serine 2 bears the N-acetylserine mark.

It belongs to the CKS family. Forms a homohexamer that can probably bind six kinase subunits.

Binds to the catalytic subunit of the cyclin dependent kinases and is essential for their biological function. The protein is Cyclin-dependent kinases regulatory subunit 1 (CKS1B) of Bos taurus (Bovine).